The primary structure comprises 214 residues: Phosphatidylserine decarboxylase proenzyme (214 aa).

Catalysis depends on serine 182, which acts as the Schiff-base intermediate with substrate; via pyruvic acid. Serine 182 bears the Pyruvic acid (Ser); by autocatalysis mark.

The protein belongs to the phosphatidylserine decarboxylase family. PSD-A subfamily. Heterodimer of a large membrane-associated beta subunit and a small pyruvoyl-containing alpha subunit. Pyruvate serves as cofactor. Is synthesized initially as an inactive proenzyme. Formation of the active enzyme involves a self-maturation process in which the active site pyruvoyl group is generated from an internal serine residue via an autocatalytic post-translational modification. Two non-identical subunits are generated from the proenzyme in this reaction, and the pyruvate is formed at the N-terminus of the alpha chain, which is derived from the carboxyl end of the proenzyme. The post-translation cleavage follows an unusual pathway, termed non-hydrolytic serinolysis, in which the side chain hydroxyl group of the serine supplies its oxygen atom to form the C-terminus of the beta chain, while the remainder of the serine residue undergoes an oxidative deamination to produce ammonia and the pyruvoyl prosthetic group on the alpha chain.

It localises to the cell membrane. The catalysed reaction is a 1,2-diacyl-sn-glycero-3-phospho-L-serine + H(+) = a 1,2-diacyl-sn-glycero-3-phosphoethanolamine + CO2. It participates in phospholipid metabolism; phosphatidylethanolamine biosynthesis; phosphatidylethanolamine from CDP-diacylglycerol: step 2/2. Catalyzes the formation of phosphatidylethanolamine (PtdEtn) from phosphatidylserine (PtdSer). This Burkholderia ambifaria (strain MC40-6) protein is Phosphatidylserine decarboxylase proenzyme.